Here is a 109-residue protein sequence, read N- to C-terminus: Spermidine export protein MdtI (109 aa).

4 consecutive transmembrane segments (helical) span residues F6 to L26, W36 to V56, A64 to F84, and L88 to L108.

It belongs to the drug/metabolite transporter (DMT) superfamily. Small multidrug resistance (SMR) (TC 2.A.7.1) family. MdtI subfamily. Forms a complex with MdtJ.

The protein resides in the cell inner membrane. In terms of biological role, catalyzes the excretion of spermidine. The chain is Spermidine export protein MdtI from Yersinia pseudotuberculosis serotype I (strain IP32953).